The sequence spans 354 residues: MASFPSLDNDRLLRTARGEPTDCTPVWMMRQAGRYLPEYQAIRKEHSFFEVVETPELAAEVTIQPVERFSLDAAILFCDIMVVPEAMGLTVKMVSGQGPTFPKPLTTPDEMERLVEPDVESALGHVFEALTVTRHELAGRVPLIGFSGAPWTLMAYMVEGGGSKSYRAARRWLYRHPDASKALLQRTTDVIVEYLIRQVDAGAQMLQVFDSWAGLHTPENFRTFCLPYLAEIATRVKAAHPDVPLVIFAKGAHYALDALADTDYDVISLDSTMDPDAARDTVGDRAVLQGNLDPCALYAPPDVLRREVQHMLAGFGPHHHIGNLGHGMLPDHDPEHARVFVDAVHEHSRHMRTV.

Substrate is bound by residues 30 to 34 (RQAGR), Phe-49, Asp-79, Tyr-156, Ser-211, and His-326.

This sequence belongs to the uroporphyrinogen decarboxylase family. Homodimer.

The protein resides in the cytoplasm. The catalysed reaction is uroporphyrinogen III + 4 H(+) = coproporphyrinogen III + 4 CO2. It participates in porphyrin-containing compound metabolism; protoporphyrin-IX biosynthesis; coproporphyrinogen-III from 5-aminolevulinate: step 4/4. Its function is as follows. Catalyzes the decarboxylation of four acetate groups of uroporphyrinogen-III to yield coproporphyrinogen-III. The sequence is that of Uroporphyrinogen decarboxylase from Salinibacter ruber (strain DSM 13855 / M31).